The sequence spans 833 residues: Serine/threonine-protein phosphatase 4 regulatory subunit 3A (833 aa).

The region spanning 1–100 (MTDTRRRVKV…DEIWEKICQV (100 aa)) is the WH1 domain. A phosphoserine mark is found at Ser-117 and Ser-127. At Lys-655 the chain carries N6-acetyllysine. Residues 683-694 (FNTDEDDMEDGE) are compositionally biased toward acidic residues. Disordered regions lie at residues 683-712 (FNTD…IMDP) and 733-833 (KTNL…KFDS). Phosphoserine is present on residues Ser-698, Ser-741, Ser-768, Ser-771, Ser-774, Ser-777, and Ser-780. Polar residues predominate over residues 734–751 (TNLSGRQSPSFKLSLSSG). Residues 752 to 768 (TKTNLTSQSSTTNLPGS) show a composition bias toward low complexity. Over residues 785–794 (PKNTSQTAAI) the composition is skewed to polar residues. Acidic residues predominate over residues 806–820 (YPDDDEDDDEDEDKE).

The protein belongs to the SMEK family. In terms of assembly, serine/threonine-protein phosphatase 4 (PP4) occurs in different assemblies of the catalytic and one or more regulatory subunits. Component of the PP4 complex PPP4C-PPP4R2-PPP4R3A. Interacts with PPP4C; the interaction requires PPP4R2.

It localises to the cytoplasm. The protein resides in the cytoskeleton. Its subcellular location is the microtubule organizing center. The protein localises to the centrosome. It is found in the nucleus. In terms of biological role, regulatory subunit of serine/threonine-protein phosphatase 4. May regulate the activity of PPP4C at centrosomal microtubule organizing centers. The PPP4C-PPP4R2-PPP4R3A PP4 complex specifically dephosphorylates H2AX phosphorylated on 'Ser-140' (gamma-H2AX) generated during DNA replication and required for DNA DSB repair. This is Serine/threonine-protein phosphatase 4 regulatory subunit 3A from Homo sapiens (Human).